A 78-amino-acid polypeptide reads, in one-letter code: Toxin BmTxKS4 (78 aa).

A signal peptide spans 1–21 (MKLKISFLILVLFSVFFAIEG). The propeptide occupies 22–32 (IIKWFPASVNG).

In terms of processing, contains 3 disulfide bonds. Expressed by the venom gland.

Its subcellular location is the secreted. Functionally, reversibly inhibits potassium channels. In Olivierus martensii (Manchurian scorpion), this protein is Toxin BmTxKS4.